The chain runs to 101 residues: Small ribosomal subunit protein uS14 (101 aa).

The segment at 1–26 (MAKVSSIKKNESRKKKSQSLHNKRSA) is disordered. Residues 11-26 (ESRKKKSQSLHNKRSA) show a composition bias toward basic residues.

This sequence belongs to the universal ribosomal protein uS14 family. As to quaternary structure, part of the 30S ribosomal subunit. Contacts proteins S3 and S10.

Binds 16S rRNA, required for the assembly of 30S particles and may also be responsible for determining the conformation of the 16S rRNA at the A site. The polypeptide is Small ribosomal subunit protein uS14 (Rickettsia felis (strain ATCC VR-1525 / URRWXCal2) (Rickettsia azadi)).